The chain runs to 352 residues: Galactokinase (352 aa).

Residue 17-20 (EHTD) participates in substrate binding. ATP-binding positions include S49 and 101 to 107 (GAGLSSS). Positions 107 and 139 each coordinate Mg(2+). The Proton acceptor role is filled by D151. Y200 is a substrate binding site.

It belongs to the GHMP kinase family. GalK subfamily. In terms of assembly, monomer.

It localises to the cytoplasm. It catalyses the reaction alpha-D-galactose + ATP = alpha-D-galactose 1-phosphate + ADP + H(+). It participates in carbohydrate metabolism; galactose metabolism. Its function is as follows. Catalyzes the transfer of the gamma-phosphate of ATP to D-galactose to form alpha-D-galactose-1-phosphate (Gal-1-P). Is very specific for its substrate, since it is not able to use D-glucose, D-fructose, D-mannose, 2-deoxy-D-glucose, and D-glucosamine as substrates. The chain is Galactokinase from Pyrococcus furiosus (strain ATCC 43587 / DSM 3638 / JCM 8422 / Vc1).